Consider the following 255-residue polypeptide: tRNA (guanine-N(1)-)-methyltransferase (255 aa).

S-adenosyl-L-methionine-binding positions include G117 and 137–142 (LGDFVL).

It belongs to the RNA methyltransferase TrmD family. Homodimer.

It is found in the cytoplasm. The catalysed reaction is guanosine(37) in tRNA + S-adenosyl-L-methionine = N(1)-methylguanosine(37) in tRNA + S-adenosyl-L-homocysteine + H(+). In terms of biological role, specifically methylates guanosine-37 in various tRNAs. This chain is tRNA (guanine-N(1)-)-methyltransferase, found in Paraburkholderia xenovorans (strain LB400).